The following is a 350-amino-acid chain: MKKIKVLCVDDSALVRGLMTEIINSHPDMEVVATAPDPLVARELIKKHNPDVLTLDVEMPRMDGLDFLEKLMRLRPMPVVMVSSLTERGGEITLRALELGAIDFVTKPKLGIRDGLIEYSEVIADKIRAASRARLRALAPASHAAPLRLRSPFASSEKLVIVGASTGGTEAIREVLQPLPADSPAILITQHMLAGFTRSFAQRLDALCAVTVREASDGERVLPGHVYLAPGGETHMRLGRSGANYVIGLQASEPVNRHRPSVDVLFHSAAEAAGGNAIGVILTGMGKDGAAGLLAMKRAGARTMAQDEASCVVFGMPREAIALGAADEVVPLADISERILTRLGDRGHRV.

The region spanning 5–122 (KVLCVDDSAL…RDGLIEYSEV (118 aa)) is the Response regulatory domain. Asp56 bears the 4-aspartylphosphate mark. Residues 152–346 (PFASSEKLVI…ERILTRLGDR (195 aa)) enclose the CheB-type methylesterase domain. Catalysis depends on residues Ser165, His191, and Asp288.

This sequence belongs to the CheB family. In terms of processing, phosphorylated by CheA. Phosphorylation of the N-terminal regulatory domain activates the methylesterase activity.

Its subcellular location is the cytoplasm. It carries out the reaction [protein]-L-glutamate 5-O-methyl ester + H2O = L-glutamyl-[protein] + methanol + H(+). It catalyses the reaction L-glutaminyl-[protein] + H2O = L-glutamyl-[protein] + NH4(+). Involved in chemotaxis. Part of a chemotaxis signal transduction system that modulates chemotaxis in response to various stimuli. Catalyzes the demethylation of specific methylglutamate residues introduced into the chemoreceptors (methyl-accepting chemotaxis proteins or MCP) by CheR. Also mediates the irreversible deamidation of specific glutamine residues to glutamic acid. The protein is Protein-glutamate methylesterase/protein-glutamine glutaminase of Bordetella pertussis (strain Tohama I / ATCC BAA-589 / NCTC 13251).